A 496-amino-acid chain; its full sequence is Solute carrier family 2, facilitated glucose transporter member 3 (496 aa).

Residues 1-10 (MGTQKVTPAL) lie on the Cytoplasmic side of the membrane. A helical membrane pass occupies residues 11–32 (IFAITVATIGSFQFGYNTGVIN). Topologically, residues 33-64 (APEKIIKEFINKTLTDKGNAPPSEVLLTSLWS) are extracellular. The N-linked (GlcNAc...) asparagine glycan is linked to Asn43. Residues 65–85 (LSVAIFSVGGMIGSFSVGLFV) traverse the membrane as a helical segment. The Cytoplasmic segment spans residues 86-90 (NRFGR). Residues 91–111 (RNSMLIVNLLAVTGGCFMGLC) form a helical membrane-spanning segment. Residues 112-118 (KVAKSVE) are Extracellular-facing. Residues 119-142 (MLILGRLIIGLFCGLCTGFVPMYI) traverse the membrane as a helical segment. Residues 143 to 153 (GEISPTALRGA) lie on the Cytoplasmic side of the membrane. The helical transmembrane segment at 154-174 (FGTLNQLGIVVGILVAQIFGL) threads the bilayer. Gln159 contributes to the D-glucose binding site. Topologically, residues 175–183 (EFILGSEEL) are extracellular. A helical membrane pass occupies residues 184–204 (WPLLLGFTILPTILQSAALPF). Topologically, residues 205–269 (CPESPRFLLI…LFRVSSYRQP (65 aa)) are cytoplasmic. The residue at position 232 (Thr232) is a Phosphothreonine. Residues 270–290 (IIISIVLQLSQQLSGINAVFY) traverse the membrane as a helical segment. An important for selectivity against fructose region spans residues 277 to 279 (QLS). Residues 280 to 281 (QQ) and Asn286 contribute to the D-glucose site. The Extracellular segment spans residues 291 to 304 (YSTGIFKDAGVQEP). Residues 305 to 325 (IYATIGAGVVNTIFTVVSLFL) traverse the membrane as a helical segment. Asn315 is a D-glucose binding site. Residues 326–331 (VERAGR) lie on the Cytoplasmic side of the membrane. A helical membrane pass occupies residues 332–352 (RTLHMIGLGGMAFCSTLMTVS). Residues 353–363 (LLLKDNYNGMS) are Extracellular-facing. A helical membrane pass occupies residues 364–389 (FVCIGAILVFVAFFEIGPGPIPWFIV). D-glucose is bound by residues Glu378 and Trp386. The Cytoplasmic segment spans residues 390–399 (AELFSQGPRP). Residues 400–420 (AAMAVAGCSNWTSNFLVGLLF) traverse the membrane as a helical segment. The Extracellular segment spans residues 421–429 (PSAAHYLGA). A helical transmembrane segment spans residues 430–450 (YVFIIFTGFLITFLAFTFFKV). At 451-496 (PETRGRTFEDITRAFEGQAHGADRSGKDGVMEVNSIEPAKETTTNV) the chain is on the cytoplasmic side. Residues Ser475 and Ser485 each carry the phosphoserine modification. Thr492 bears the Phosphothreonine mark.

The protein belongs to the major facilitator superfamily. Sugar transporter (TC 2.A.1.1) family. Glucose transporter subfamily. As to quaternary structure, interacts with SMIM43; the interaction may promote SLC2A3-mediated glucose transport to meet the energy needs of mesendoderm differentiation.

Its subcellular location is the cell membrane. The protein resides in the perikaryon. It localises to the cell projection. The catalysed reaction is D-glucose(out) = D-glucose(in). It catalyses the reaction D-galactose(in) = D-galactose(out). With respect to regulation, deoxyglucose transport is inhibited by D-glucose, D-galactose and maltose. Galactose transport is inhibited by D-glucose and maltose. Functionally, facilitative glucose transporter. Can also mediate the uptake of various other monosaccharides across the cell membrane. Mediates the uptake of glucose, 2-deoxyglucose, galactose, mannose, xylose and fucose, and probably also dehydroascorbate. Does not mediate fructose transport. Required for mesendoderm differentiation. The sequence is that of Solute carrier family 2, facilitated glucose transporter member 3 from Pongo abelii (Sumatran orangutan).